The primary structure comprises 183 residues: DELTA-miturgitoxin-Cp1c (183 aa).

A signal peptide spans 1–20 (MKFSLFFSVFFLAVLHACLS). Positions 21-47 (ESEIDLEDEEHFMSSDSFLSEIQDESR) are excised as a propeptide. The Processing quadruplet motif signature appears at 44 to 47 (DESR). 8 cysteine pairs are disulfide-bonded: cysteine 51–cysteine 66, cysteine 58–cysteine 75, cysteine 65–cysteine 88, cysteine 77–cysteine 86, cysteine 115–cysteine 130, cysteine 122–cysteine 139, cysteine 129–cysteine 157, and cysteine 141–cysteine 155. Residues 164-177 (QAIEGALRIAKKLI) form a predicted alpha-helix region. Tryptophan 181 carries the post-translational modification Tryptophan amide.

Belongs to the neurotoxin 19 (CSTX) family. Double-CSTX subfamily. Cleavage of the propeptide depends on the processing quadruplet motif (XXXR, with at least one of X being E). As to expression, expressed by the venom gland.

It is found in the secreted. The protein localises to the target cell membrane. Spider venom toxin that exhibits cytolytic activity by forming an alpha-helix across the membrane. Lethal to insect larvae. Causes instant paralysis and death in the larvae of the flesh fly (S.carnaria) at doses of 20 ug/g, at doses of less than 10 ug/g causes reversible paralysis. Has cytolytic activity against insect Sf9 cells. Causes stable and irreversible depolarization of fly muscle fibers, leading to contracture at higher toxin concentrations. Destabilizes membranes. This Cheiracanthium punctorium (Yellow sac spider) protein is DELTA-miturgitoxin-Cp1c.